Consider the following 60-residue polypeptide: Large ribosomal subunit protein bL32 (60 aa).

Residues 1-60 (MAVQQVKKSRSKRDIRRSHDSLTNPTLSTDKSTGELHLRHHVSPNGFYKGRKVVDTKSED) form a disordered region. A compositionally biased stretch (basic residues) spans 7 to 16 (KKSRSKRDIR). Over residues 22 to 31 (LTNPTLSTDK) the composition is skewed to polar residues.

This sequence belongs to the bacterial ribosomal protein bL32 family.

This Francisella tularensis subsp. tularensis (strain SCHU S4 / Schu 4) protein is Large ribosomal subunit protein bL32.